The sequence spans 316 residues: Beta-ketoacyl-[acyl-carrier-protein] synthase III (316 aa).

Active-site residues include cysteine 112 and histidine 243. Positions 244-248 are ACP-binding; it reads QANLR. Asparagine 273 is a catalytic residue.

This sequence belongs to the thiolase-like superfamily. FabH family. Homodimer.

Its subcellular location is the cytoplasm. It catalyses the reaction malonyl-[ACP] + acetyl-CoA + H(+) = 3-oxobutanoyl-[ACP] + CO2 + CoA. Its pathway is lipid metabolism; fatty acid biosynthesis. Catalyzes the condensation reaction of fatty acid synthesis by the addition to an acyl acceptor of two carbons from malonyl-ACP. Catalyzes the first condensation reaction which initiates fatty acid synthesis and may therefore play a role in governing the total rate of fatty acid production. Possesses both acetoacetyl-ACP synthase and acetyl transacylase activities. Its substrate specificity determines the biosynthesis of branched-chain and/or straight-chain of fatty acids. The sequence is that of Beta-ketoacyl-[acyl-carrier-protein] synthase III from Haemophilus influenzae (strain 86-028NP).